The chain runs to 171 residues: MFVVKMVLGFLILLSPLCATGLDISQTDIIERSLNFLLFVGILWYFLAKRLRSFLHSKSLEISKRLEEIQAQLKVSKEHKKKLLKELEQAKEKAELIISDANKEAYTITQKYELQTKMDVENLIKNSKALMDLEVKKIKRELVESVFKDLRESKKVSFNAQDCVNILKQRL.

Residues F2–L22 form a helical membrane-spanning segment.

The protein belongs to the ATPase B chain family. F-type ATPases have 2 components, F(1) - the catalytic core - and F(0) - the membrane proton channel. F(1) has five subunits: alpha(3), beta(3), gamma(1), delta(1), epsilon(1). F(0) has three main subunits: a(1), b(2) and c(10-14). The alpha and beta chains form an alternating ring which encloses part of the gamma chain. F(1) is attached to F(0) by a central stalk formed by the gamma and epsilon chains, while a peripheral stalk is formed by the delta and b chains.

It localises to the cell inner membrane. In terms of biological role, f(1)F(0) ATP synthase produces ATP from ADP in the presence of a proton or sodium gradient. F-type ATPases consist of two structural domains, F(1) containing the extramembraneous catalytic core and F(0) containing the membrane proton channel, linked together by a central stalk and a peripheral stalk. During catalysis, ATP synthesis in the catalytic domain of F(1) is coupled via a rotary mechanism of the central stalk subunits to proton translocation. Its function is as follows. Component of the F(0) channel, it forms part of the peripheral stalk, linking F(1) to F(0). The polypeptide is ATP synthase subunit b (Helicobacter pylori (strain J99 / ATCC 700824) (Campylobacter pylori J99)).